We begin with the raw amino-acid sequence, 160 residues long: 6,7-dimethyl-8-ribityllumazine synthase (160 aa).

5-amino-6-(D-ribitylamino)uracil is bound by residues Phe-23, 61-63, and 85-87; these read SFE and AVI. 90 to 91 is a (2S)-2-hydroxy-3-oxobutyl phosphate binding site; it reads DT. His-93 (proton donor) is an active-site residue. Phe-118 is a binding site for 5-amino-6-(D-ribitylamino)uracil. Arg-132 serves as a coordination point for (2S)-2-hydroxy-3-oxobutyl phosphate.

Belongs to the DMRL synthase family.

The enzyme catalyses (2S)-2-hydroxy-3-oxobutyl phosphate + 5-amino-6-(D-ribitylamino)uracil = 6,7-dimethyl-8-(1-D-ribityl)lumazine + phosphate + 2 H2O + H(+). Its pathway is cofactor biosynthesis; riboflavin biosynthesis; riboflavin from 2-hydroxy-3-oxobutyl phosphate and 5-amino-6-(D-ribitylamino)uracil: step 1/2. Its function is as follows. Catalyzes the formation of 6,7-dimethyl-8-ribityllumazine by condensation of 5-amino-6-(D-ribitylamino)uracil with 3,4-dihydroxy-2-butanone 4-phosphate. This is the penultimate step in the biosynthesis of riboflavin. The chain is 6,7-dimethyl-8-ribityllumazine synthase from Synechococcus sp. (strain CC9311).